The following is a 389-amino-acid chain: Sinapine esterase (389 aa).

The first 25 residues, 1–25, serve as a signal peptide directing secretion; sequence MASSLKKLITSFLLFFFYTIIVASS. The Nucleophile role is filled by S41. 3 N-linked (GlcNAc...) asparagine glycosylation sites follow: N104, N137, and N320. Residues D345 and H348 contribute to the active site. Residues N372 and N383 are each glycosylated (N-linked (GlcNAc...) asparagine).

It belongs to the 'GDSL' lipolytic enzyme family. Expressed in most tissues or organs of the mature seedlings. Not expressed in roots of mature seedlings.

It localises to the secreted. The enzyme catalyses O-sinapoylcholine + H2O = (E)-sinapate + choline + H(+). Its activity is regulated as follows. Inhibited by PMSF. Functionally, sinapine esterase that catalyzes that hydrolysis of sinapine, releasing choline and sinapate. Sinapine (O-sinapoylcholine) is the predominant phenolic compound in a complex group of sinapate esters in seeds of oilseed rape (B.napus). Sinapine has antinutritive activity and prevents the use of seed protein for food and feed. Shows broad substrate specificity towards various other choline esters, including phosphatidylcholine. The polypeptide is Sinapine esterase (Brassica napus (Rape)).